The chain runs to 230 residues: Large ribosomal subunit protein uL1 (230 aa).

It belongs to the universal ribosomal protein uL1 family. Part of the 50S ribosomal subunit.

Functionally, binds directly to 23S rRNA. The L1 stalk is quite mobile in the ribosome, and is involved in E site tRNA release. In terms of biological role, protein L1 is also a translational repressor protein, it controls the translation of the L11 operon by binding to its mRNA. This chain is Large ribosomal subunit protein uL1, found in Onion yellows phytoplasma (strain OY-M).